The primary structure comprises 183 residues: Streptavidin (183 aa).

The N-terminal stretch at Met1–Ala24 is a signal peptide. The region spanning Ala37–Pro159 is the Avidin-like domain. Tyr67 and Tyr78 together coordinate biotin. The short motif at Arg83–Asp85 is the Cell attachment site; atypical element. Biotin is bound by residues Trp116, Trp132, and Trp144.

It belongs to the avidin/streptavidin family. Homotetramer.

The protein resides in the secreted. Functionally, the biological function of streptavidin is not known. Forms a strong non-covalent specific complex with biotin (one molecule of biotin per subunit of streptavidin). This chain is Streptavidin, found in Streptomyces avidinii.